The primary structure comprises 98 residues: TTCTSTQQTAAYVTLVSILSDSSFNQCATDSGYSMLTATALPTDAQYKLMCSSTACNTMIKKIVSLNAPNCDLTVPTSGLVLNVYEYANGFSTKCASL.

3 disulfides stabilise this stretch: Cys-3–Cys-71, Cys-27–Cys-56, and Cys-51–Cys-95.

The protein belongs to the elicitin family.

The protein resides in the secreted. Functionally, induces local and distal defense responses (incompatible hypersensitive reaction) in plants from the solanaceae and cruciferae families. Elicits leaf necrosis and causes the accumulation of pathogenesis-related proteins. Might interact with the lipidic molecules of the plasma membrane. The polypeptide is Alpha-elicitin DRE-alpha (Phytophthora drechsleri).